The chain runs to 137 residues: Large ribosomal subunit protein uL16 (137 aa).

The protein belongs to the universal ribosomal protein uL16 family. In terms of assembly, part of the 50S ribosomal subunit.

Its function is as follows. Binds 23S rRNA and is also seen to make contacts with the A and possibly P site tRNAs. The polypeptide is Large ribosomal subunit protein uL16 (Mesorhizobium japonicum (strain LMG 29417 / CECT 9101 / MAFF 303099) (Mesorhizobium loti (strain MAFF 303099))).